Reading from the N-terminus, the 225-residue chain is Probable septum site-determining protein MinC (225 aa).

The segment at P87–P112 is disordered. Residues A91–K108 are compositionally biased toward polar residues.

The protein belongs to the MinC family. As to quaternary structure, interacts with MinD and FtsZ.

Functionally, cell division inhibitor that blocks the formation of polar Z ring septums. Rapidly oscillates between the poles of the cell to destabilize FtsZ filaments that have formed before they mature into polar Z rings. Prevents FtsZ polymerization. This Prochlorococcus marinus (strain MIT 9313) protein is Probable septum site-determining protein MinC.